Reading from the N-terminus, the 183-residue chain is Putative 3-methyladenine DNA glycosylase (183 aa).

The protein belongs to the DNA glycosylase MPG family.

The polypeptide is Putative 3-methyladenine DNA glycosylase (Rickettsia africae (strain ESF-5)).